Here is a 530-residue protein sequence, read N- to C-terminus: Laccase-2 (530 aa).

Residues methionine 1–alanine 23 form the signal peptide. Plastocyanin-like domains lie at asparagine 36 to glutamate 154 and threonine 167 to asparagine 311. An N-linked (GlcNAc...) asparagine glycan is attached at asparagine 82. The Cu cation site is built by histidine 88 and histidine 90. 2 disulfide bridges follow: cysteine 109–cysteine 520 and cysteine 141–cysteine 228. The N-linked (GlcNAc...) asparagine glycan is linked to asparagine 120. Cu cation is bound by residues histidine 133 and histidine 135. N-linked (GlcNAc...) asparagine glycans are attached at residues asparagine 191, asparagine 240, asparagine 292, asparagine 311, asparagine 366, asparagine 375, asparagine 392, and asparagine 412. The region spanning tyrosine 379–glutamine 504 is the Plastocyanin-like 3 domain. Residues histidine 428, histidine 431, histidine 433, histidine 484, cysteine 485, histidine 486, and histidine 490 each coordinate Cu cation.

This sequence belongs to the multicopper oxidase family. Cu cation is required as a cofactor.

The protein localises to the secreted. It carries out the reaction 4 hydroquinone + O2 = 4 benzosemiquinone + 2 H2O. Inhibited by chloride ions. Inhibited by citrate. Inhibited by oxalate. Activated by acetate. In terms of biological role, in vitro, has activity towards 2,2'-azino-bis(3-ethylbenzthiazoline-6-sulfonic acid) (ABTS), 2,6-dimethoxy-phenol, and guaiacol. Although brown rot fungi preferentially degrade hemicellulose and cellulose, the enzyme may contribute to generating small amounts of lignin breakdown products required for catalytic reactions. The polypeptide is Laccase-2 (Fomitopsis schrenkii (Brown rot fungus)).